Reading from the N-terminus, the 190-residue chain is Adenine phosphoribosyltransferase (190 aa).

It belongs to the purine/pyrimidine phosphoribosyltransferase family. In terms of assembly, homodimer.

It localises to the cytoplasm. It carries out the reaction AMP + diphosphate = 5-phospho-alpha-D-ribose 1-diphosphate + adenine. It functions in the pathway purine metabolism; AMP biosynthesis via salvage pathway; AMP from adenine: step 1/1. In terms of biological role, catalyzes a salvage reaction resulting in the formation of AMP, that is energically less costly than de novo synthesis. The polypeptide is Adenine phosphoribosyltransferase (Cupriavidus metallidurans (strain ATCC 43123 / DSM 2839 / NBRC 102507 / CH34) (Ralstonia metallidurans)).